The sequence spans 562 residues: Protein wntless (562 aa).

At 1 to 13 (MSGTILENLSGRK) the chain is on the cytoplasmic side. Residues 14–34 (LSILVGSLLLCQVLCFLLGGL) traverse the membrane as a helical segment. At 35–239 (YAPVPAGHTN…AIHQNGGFTH (205 aa)) the chain is on the lumenal side. N58 carries an N-linked (GlcNAc...) asparagine glycan. Residues 240-260 (VWLMLKTLLFPFVVGIMVWFW) form a helical membrane-spanning segment. Topologically, residues 261–270 (RRVHLLQRSP) are cytoplasmic. Residues 271 to 291 (ALLEYMLLYLGGALTFLNLPL) form a helical membrane-spanning segment. Residues 292–311 (EYLSLTIEMPYMLLLSDIRQ) lie on the Lumenal side of the membrane. A helical membrane pass occupies residues 312 to 332 (GIFYAMLLSFWLVFAGEHMLI). The Cytoplasmic portion of the chain corresponds to 333–344 (QDSHNKSTIRSR). The chain crosses the membrane as a helical span at residues 345–365 (YWKHLSAVVVGCISLFVFDIS). Topologically, residues 366 to 386 (ERGVQLRNPFYSIWTTPLGAK) are lumenal. A helical transmembrane segment spans residues 387–407 (VAMSFILLAGVSAAVYFLFLC). The Cytoplasmic portion of the chain corresponds to 408–441 (YMISKVFKNIGDKRTSLPSMSQARRLHYEGLIYR). The chain crosses the membrane as a helical span at residues 442–462 (FKFLMLATLLCAALTVTGFIM). Residues 463-482 (GQMAEGQWKWNDDVEIQLTS) lie on the Lumenal side of the membrane. The chain crosses the membrane as a helical span at residues 483–503 (AFLTGVYGMWNIYIFALLILY). Topologically, residues 504-562 (APSHKQWPTMHHSDETTQSNENIVASAASEEIEFSNLPSDSNPSEISSLTSFTRKVAFE) are cytoplasmic. The interval 538–562 (SNLPSDSNPSEISSLTSFTRKVAFE) is disordered. Over residues 539–556 (NLPSDSNPSEISSLTSFT) the composition is skewed to polar residues.

Belongs to the wntless family. Interacts with wg; in the Golgi. Interacts with Vps35, a component of the retromer complex; wls stability is regulated by Vps35.

It localises to the presynaptic cell membrane. The protein localises to the postsynaptic cell membrane. Its subcellular location is the cell membrane. It is found in the endoplasmic reticulum membrane. The protein resides in the endosome membrane. It localises to the golgi apparatus membrane. In terms of biological role, a segment polarity gene required for wingless (wg)-dependent patterning processes, acting in both wg-sending cells and wg-target cells. In non-neuronal cells wls directs wg secretion. The wls traffic loop encompasses the Golgi, the cell surface, an endocytic compartment and a retrograde route leading back to the Golgi, and involves clathrin-mediated endocytosis and the retromer complex (a conserved protein complex consisting of Vps35 and Vps26). In neuronal cells (the larval motorneuron NMJ), the wg signal moves across the synapse via the release of wls-containing exosome-like vesicles. Postsynaptic wls is required for the trafficking of fz2 through the fz2-interacting protein Grip. The chain is Protein wntless from Drosophila persimilis (Fruit fly).